Here is a 318-residue protein sequence, read N- to C-terminus: Taste receptor type 2 member 7 (318 aa).

The Extracellular segment spans residues 1–9; it reads MTDKVQTTL. A helical transmembrane segment spans residues 10–30; it reads LFLAVGEFSVGILGNAFIGLV. Residues 31-55 are Cytoplasmic-facing; it reads NCMDWIKKRKIASIDLILTSLAISR. Residues 56–76 form a helical membrane-spanning segment; the sequence is ICLLCVILLDCFILVLYPDVY. Residues 77–94 are Extracellular-facing; sequence ATGKEMRIIDFFWILTNH. Residues 95–115 form a helical membrane-spanning segment; it reads LSIWFATCLSIYYFFKIANFF. Over 116–128 the chain is Cytoplasmic; that stretch reads HPLFLWMKWRIDR. The chain crosses the membrane as a helical span at residues 129–149; it reads VISWILLGCMVLSVFISLPAT. Over 150 to 187 the chain is Extracellular; the sequence is ENLNADFRFCVKAKRKTNLTWSCRVNKTQHASIKLLLN. 2 N-linked (GlcNAc...) asparagine glycosylation sites follow: Asn-167 and Asn-175. Residues 188–208 traverse the membrane as a helical segment; it reads LATLLPFCVCLMSFFLLILSL. Residues 209–235 lie on the Cytoplasmic side of the membrane; it reads RRHIRRMQLSATGCRDPSTEAHVRALK. The helical transmembrane segment at 236 to 256 threads the bilayer; sequence AVISFLLLFIAYYLSFLIATS. At 257–266 the chain is on the extracellular side; the sequence is SYFMPETELA. Residues 267-287 traverse the membrane as a helical segment; sequence VIFGESIALIYPSSHSFILIL. The Cytoplasmic portion of the chain corresponds to 288–318; it reads GNNKLRHASLKVIWKVMSILKGRKFQQHKQI.

Belongs to the G-protein coupled receptor T2R family.

Its subcellular location is the membrane. Functionally, gustducin-coupled receptor implicated in the perception of bitter compounds in the oral cavity and the gastrointestinal tract. Signals through PLCB2 and the calcium-regulated cation channel TRPM5. The polypeptide is Taste receptor type 2 member 7 (TAS2R7) (Pongo pygmaeus (Bornean orangutan)).